Consider the following 84-residue polypeptide: MKVVLLVCLVWMMAMMELVSCECWSQADCSDGHCCAGSSFSKNCRPYGGDGEQCEPRNKYEVYSTGCPCEENLMCSVINRCQSA.

The first 21 residues, 1 to 21, serve as a signal peptide directing secretion; that stretch reads MKVVLLVCLVWMMAMMELVSC. 5 cysteine pairs are disulfide-bonded: C23-C35, C29-C44, C34-C67, C54-C75, and C69-C81.

The protein belongs to the AVIT (prokineticin) family. In terms of tissue distribution, expressed by the venom gland.

Its subcellular location is the secreted. The sequence is that of U8-theraphotoxin-Hhn1c 2 from Cyriopagopus hainanus (Chinese bird spider).